Here is a 335-residue protein sequence, read N- to C-terminus: Cytoskeleton protein RodZ (335 aa).

The Cytoplasmic segment spans residues 1–111 (MNTEATHDQN…LGKRRKKRDG (111 aa)). An HTH cro/C1-type domain is found at 19–71 (LRNAREQLGLSQQAVAERLCLKVSTVRDIEEDKAPADLASTFLRGYIRSYARL). Positions 30–49 (QQAVAERLCLKVSTVRDIEE) form a DNA-binding region, H-T-H motif. Residues 112 to 132 (WLMTFTWLVLFVVIGLSGAWW) traverse the membrane as a helical; Signal-anchor for type II membrane protein segment. Topologically, residues 133 to 335 (WQDHKAQQEE…TLNAEQSPAQ (203 aa)) are periplasmic. The segment covering 148-164 (DQSSAELNNNQSQSVPL) has biased composition (polar residues). The disordered stretch occupies residues 148 to 244 (DQSSAELNNN…PLPTDQAGVT (97 aa)). 2 stretches are compositionally biased toward low complexity: residues 165–205 (DTST…DPQQ) and 217–239 (DTAATPAPAATTTPDGAAPLPTD).

It belongs to the RodZ family.

The protein localises to the cell inner membrane. Its function is as follows. Cytoskeletal protein that is involved in cell-shape control through regulation of the length of the long axis. In Escherichia coli O6:H1 (strain CFT073 / ATCC 700928 / UPEC), this protein is Cytoskeleton protein RodZ.